Reading from the N-terminus, the 324-residue chain is MSTFTPTRNDWQLDEILELFHTAFNDLILQSHLLHRQFFSNNEVQISSLLNIKTGGCPENCKYCSQSAHYKTDLKKESLLDIESIKKAIQTAKKNGADRFCFAAAWRQVRDRDLEYICDIIDLIKSENLESCASLGMVTLEQAKKLKNAGLDFYNHNIDTSRDFYPNVTTTRSYDDRLTSLNNIHEAGINICSGGILGLGESVEDRAKMLLTLANLKEHPLSVPINRLVPIKGTPFENNAKIDNIDFIKTIAVARILMPKSYIRLAAGRMSMSEEMQALCLFAGANSIFYGEKLLTTPNADCNDDRNLLSKLGAKTKEPVFFNS.

In terms of domain architecture, Radical SAM core spans 42 to 269; it reads NEVQISSLLN…KSYIRLAAGR (228 aa). The [4Fe-4S] cluster site is built by C57, C61, and C64. C101, C132, C192, and R264 together coordinate [2Fe-2S] cluster.

The protein belongs to the radical SAM superfamily. Biotin synthase family. Homodimer. [4Fe-4S] cluster serves as cofactor. Requires [2Fe-2S] cluster as cofactor.

The enzyme catalyses (4R,5S)-dethiobiotin + (sulfur carrier)-SH + 2 reduced [2Fe-2S]-[ferredoxin] + 2 S-adenosyl-L-methionine = (sulfur carrier)-H + biotin + 2 5'-deoxyadenosine + 2 L-methionine + 2 oxidized [2Fe-2S]-[ferredoxin]. It functions in the pathway cofactor biosynthesis; biotin biosynthesis; biotin from 7,8-diaminononanoate: step 2/2. Functionally, catalyzes the conversion of dethiobiotin (DTB) to biotin by the insertion of a sulfur atom into dethiobiotin via a radical-based mechanism. This Ehrlichia canis (strain Jake) protein is Biotin synthase.